Here is a 178-residue protein sequence, read N- to C-terminus: Ribosome maturation factor RimM (178 aa).

The region spanning 99–178 (QGEFYWRDLI…EITVDWDPGF (80 aa)) is the PRC barrel domain.

It belongs to the RimM family. Binds ribosomal protein uS19.

It is found in the cytoplasm. An accessory protein needed during the final step in the assembly of 30S ribosomal subunit, possibly for assembly of the head region. Essential for efficient processing of 16S rRNA. May be needed both before and after RbfA during the maturation of 16S rRNA. It has affinity for free ribosomal 30S subunits but not for 70S ribosomes. In Pseudoalteromonas translucida (strain TAC 125), this protein is Ribosome maturation factor RimM.